The chain runs to 20 residues: Magnificalysin I (20 aa).

The interval 1–10 (ALAGTIIAGA) is plays an important role in the hemolytic activity. The interval 9 to 20 (GASLTFKILDEV) is N-terminal region.

It belongs to the actinoporin family. Sea anemone subfamily. Octamer or nonamer in membranes. Monomer in the soluble state.

It is found in the secreted. The protein localises to the nematocyst. The protein resides in the target cell membrane. Pore-forming protein that forms cations-selective hydrophilic pores of around 1 nm and causes cytolysis. Pore formation is a multi-step process that involves specific recognition of membrane sphingomyelin (but neither cholesterol nor phosphatidylcholine) using aromatic rich region and adjacent phosphocholine (POC) binding site, firm binding to the membrane (mainly driven by hydrophobic interactions) accompanied by the transfer of the N-terminal region to the lipid-water interface and finally pore formation after oligomerization of monomers. The sequence is that of Magnificalysin I from Heteractis magnifica (Magnificent sea anemone).